The following is a 624-amino-acid chain: Leucine-rich repeat, immunoglobulin-like domain and transmembrane domain-containing protein 1 (624 aa).

An N-terminal signal peptide occupies residues 1 to 21 (MWVALGMLWLLALGGPHQAWG). One can recognise an LRRNT domain in the interval 22–59 (FCPSECSCSLRILSDGSKARTVVCSDPDLTLPPASIPP). The Lumenal portion of the chain corresponds to 22–527 (FCPSECSCSL…EVVDAEGTQR (506 aa)). LRR repeat units lie at residues 60–81 (DTCK…TFRP), 84–105 (RLEQ…MLRG), 108–129 (RLRE…ALRD), 132–153 (QLQL…AAHF), and 156–177 (NLTF…LLDV). Asparagine 156 carries an N-linked (GlcNAc...) asparagine glycan. The LRRCT domain maps to 201 to 254 (NPWVCDCRLYDLVHLLDGWVSSNLIFIEARLRCASPRSLAGVAFSQLELRKCQS). The Ig-like C2-type domain maps to 267–336 (PLGSTVLLRC…YICQAKNFLG (70 aa)). The cysteines at positions 276 and 329 are disulfide-linked. 2 N-linked (GlcNAc...) asparagine glycosylation sites follow: asparagine 297 and asparagine 456. The Fibronectin type-III domain maps to 431 to 519 (MVRSLKVVGD…QCVIFSTDEV (89 aa)). Residues 526–549 (QRLINMVVISVAAIIALPPTLLVC) form an LRR 6 repeat. Residues 528–548 (LINMVVISVAAIIALPPTLLV) traverse the membrane as a helical segment. The Cytoplasmic portion of the chain corresponds to 549–624 (CCGALRRRCH…GGRRINEYFC (76 aa)).

May form a homodimer. Interacts with LRIT2; may form a heterodimer with LRIT2. Interacts (via its N-terminal extracellular domain) with metabotropic glutamate receptor GRM6. Interacts (via its extreme C-terminus) with the scaffold protein FRMPD2 (via the third PDZ domain); the interaction leads to their colocalization in photoreceptor synapses. As to expression, expressed predominantly in developing photoreceptor and bipolar cells.

Its subcellular location is the endoplasmic reticulum membrane. The protein localises to the cell projection. It is found in the dendrite. Functionally, photoreceptor synaptic protein essential for normal vision. Involved in synapse formation in cone photoreceptor cells. This chain is Leucine-rich repeat, immunoglobulin-like domain and transmembrane domain-containing protein 1 (Lrit1), found in Mus musculus (Mouse).